We begin with the raw amino-acid sequence, 185 residues long: Protein N-terminal glutamine amidohydrolase (185 aa).

Active-site residues include Cys-14, His-62, and Asp-78.

It belongs to the NTAQ1 family. In terms of assembly, monomer.

The enzyme catalyses N-terminal L-glutaminyl-[protein] + H2O = N-terminal L-glutamyl-[protein] + NH4(+). In terms of biological role, mediates the side-chain deamidation of N-terminal glutamine residues to glutamate, an important step in N-end rule pathway of protein degradation. Conversion of the resulting N-terminal glutamine to glutamate renders the protein susceptible to arginylation, polyubiquitination and degradation as specified by the N-end rule. Does not act on substrates with internal or C-terminal glutamine and does not act on non-glutamine residues in any position. The polypeptide is Protein N-terminal glutamine amidohydrolase (Caenorhabditis briggsae).